Here is a 411-residue protein sequence, read N- to C-terminus: NADH-quinone oxidoreductase subunit H (411 aa).

A run of 9 helical transmembrane segments spans residues 18 to 38 (LAKSLGIFAFLLLTVLAAILI), 84 to 104 (WIYLAAPIISVIPAFMAFAVI), 124 to 144 (LPVAVLYILAVTSIGVYGIVL), 165 to 185 (VISYEIAMALSFAAVFIYAGT), 198 to 218 (TWYIVLLLPSFLVYVTAMVGE), 260 to 280 (VSALATTLFLGGWHAPWPISI), 288 to 308 (WWPLLWFTVKVWLFLFFFMWL), 321 to 341 (MALGWKILIPVSLGWIMIVAI), and 352 to 372 (APATAAIGLAVAAVILLALLG).

It belongs to the complex I subunit 1 family. NDH-1 is composed of 14 different subunits. Subunits NuoA, H, J, K, L, M, N constitute the membrane sector of the complex.

It localises to the cell membrane. It catalyses the reaction a quinone + NADH + 5 H(+)(in) = a quinol + NAD(+) + 4 H(+)(out). Its function is as follows. NDH-1 shuttles electrons from NADH, via FMN and iron-sulfur (Fe-S) centers, to quinones in the respiratory chain. The immediate electron acceptor for the enzyme in this species is believed to be menaquinone. Couples the redox reaction to proton translocation (for every two electrons transferred, four hydrogen ions are translocated across the cytoplasmic membrane), and thus conserves the redox energy in a proton gradient. This subunit may bind ubiquinone. This chain is NADH-quinone oxidoreductase subunit H, found in Mycolicibacterium vanbaalenii (strain DSM 7251 / JCM 13017 / BCRC 16820 / KCTC 9966 / NRRL B-24157 / PYR-1) (Mycobacterium vanbaalenii).